Reading from the N-terminus, the 557-residue chain is Formate--tetrahydrofolate ligase (557 aa).

65-72 is an ATP binding site; that stretch reads TPAGEGKT.

Belongs to the formate--tetrahydrofolate ligase family.

It catalyses the reaction (6S)-5,6,7,8-tetrahydrofolate + formate + ATP = (6R)-10-formyltetrahydrofolate + ADP + phosphate. The protein operates within one-carbon metabolism; tetrahydrofolate interconversion. This Methylobacterium radiotolerans (strain ATCC 27329 / DSM 1819 / JCM 2831 / NBRC 15690 / NCIMB 10815 / 0-1) protein is Formate--tetrahydrofolate ligase.